Consider the following 338-residue polypeptide: Anthranilate phosphoribosyltransferase (338 aa).

5-phospho-alpha-D-ribose 1-diphosphate-binding positions include Gly81, 84 to 85, Thr89, 91 to 94, 109 to 117, and Ser121; these read GD, NIST, and KHGNRGVSS. An anthranilate-binding site is contributed by Gly81. Mg(2+) is bound at residue Ser93. An anthranilate-binding site is contributed by Asn112. Arg167 serves as a coordination point for anthranilate. Mg(2+) contacts are provided by Asp225 and Glu226.

This sequence belongs to the anthranilate phosphoribosyltransferase family. In terms of assembly, homodimer. Mg(2+) is required as a cofactor.

It catalyses the reaction N-(5-phospho-beta-D-ribosyl)anthranilate + diphosphate = 5-phospho-alpha-D-ribose 1-diphosphate + anthranilate. The protein operates within amino-acid biosynthesis; L-tryptophan biosynthesis; L-tryptophan from chorismate: step 2/5. Functionally, catalyzes the transfer of the phosphoribosyl group of 5-phosphorylribose-1-pyrophosphate (PRPP) to anthranilate to yield N-(5'-phosphoribosyl)-anthranilate (PRA). The protein is Anthranilate phosphoribosyltransferase of Methanoculleus marisnigri (strain ATCC 35101 / DSM 1498 / JR1).